Here is a 517-residue protein sequence, read N- to C-terminus: Nectin-1 (517 aa).

Positions Met1–Ser30 are cleaved as a signal peptide. Positions Gln31–Thr141 constitute an Ig-like V-type domain. The Extracellular portion of the chain corresponds to Gln31–Ala355. Residues Asn36, Asn72, and Asn139 are each glycosylated (N-linked (GlcNAc...) asparagine). An intrachain disulfide couples Cys51 to Cys124. Ig-like C2-type domains follow at residues Trp149–Ser238 and Pro247–Thr334. 2 disulfide bridges follow: Cys172–Cys226 and Cys269–Cys316. An N-linked (GlcNAc...) (complex) asparagine glycan is attached at Asn202. The tract at residues Trp282–Thr299 is interaction with FGFR. N-linked (GlcNAc...) asparagine glycosylation is found at Asn286, Asn297, Asn307, and Asn332. Residues Ile356–Val376 form a helical membrane-spanning segment. Topologically, residues Ala377–Val517 are cytoplasmic. The segment at Gly399–Tyr488 is disordered. Residues Ser422, Ser434, and Ser435 each carry the phosphoserine modification. Phosphotyrosine is present on Tyr436. The segment covering Tyr436 to Gly445 has biased composition (acidic residues). Positions Gly449 to Arg466 are enriched in basic and acidic residues. Position 511 is a phosphoserine (Ser511).

The protein belongs to the nectin family. In terms of assembly, cis- and trans-homodimer. Can form trans-heterodimers with NECTIN3 and with NECTIN4. Interaction between NECTIN1 and NECTIN3 on the pre- and postsynaptic sites, respectively, initiates the formation of puncta adherentia junctions between axons and dendrites. Interacts (via cytoplasmic domain) with AFDN (via PDZ domain); this interaction recruits NECTIN1 to cadherin-based adherens junctions and provides a connection with the actin cytoskeleton. Interacts with integrin alphaV/beta3. Interacts (via Ig-like C2-type domain 2) with FGFR1, FGFR2 and FGFR3. As to quaternary structure, (Microbial infection) Interacts with herpes simplex virus 1/HHV-1, herpes simplex virus 2/HHV-2, and pseudorabies virus/PRV envelope glycoprotein D. Post-translationally, (Microbial infection) Ubiquitinated by CBL following infection by herpes simplex virus 1/HHV-1 and association with HHV-1 envelope glycoprotein D, leading to its removal from cell surface.

The protein resides in the cell membrane. The protein localises to the cell junction. It is found in the adherens junction. Its subcellular location is the presynaptic cell membrane. It localises to the secreted. In terms of biological role, cell adhesion molecule that promotes cell-cell contacts and plays important roles in the development of the nervous system. Acts by forming homophilic or heterophilic trans-dimers. Heterophilic interactions have been detected between NECTIN1 and NECTIN3 and between NECTIN1 and NECTIN4. Involved in axon guidance by promoting contacts between the commissural axons and the floor plate cells. Involved in synaptogegesis. Has some neurite outgrowth-promoting activity. Promotes formation of checkerboard-like cellular pattern of hair cells and supporting cells in the auditory epithelium via heterophilic interaction with NECTIN3: NECTIN1 is present in the membrane of hair cells and associates with NECTIN3 on supporting cells, thereby mediating heterotypic adhesion between these two cell types. Required for enamel mineralization. (Microbial infection) Acts as a receptor for herpes simplex virus 1/HHV-1, herpes simplex virus 2/HHV-2, and pseudorabies virus/PRV. Constitutes the major receptor for herpes simplex virus 1/HHV-1 entry into host cells. This Homo sapiens (Human) protein is Nectin-1.